The following is an 837-amino-acid chain: Dapper homolog 2 (837 aa).

Residues 65–113 adopt a coiled-coil conformation; it reads ENVSKEELRLEATLSLLKQQLTRLRRQDVGLKTHLQQLDQQITELKLDV. Disordered stretches follow at residues 189–265, 424–497, 512–564, 600–649, and 738–782; these read ADES…PKYQ, HGKH…DKSS, GSQR…KQSG, QQIP…HTQR, and EMSD…EDEG. Composition is skewed to polar residues over residues 246–265 and 432–445; these read VKSS…PKYQ and LDLQ…NNTA. Composition is skewed to basic and acidic residues over residues 456–466, 486–496, and 548–560; these read ASEKRSGHFPK, EGSRASCHDKS, and LSRE…RTDL. A compositionally biased stretch (polar residues) spans 741–759; sequence DYTTNRFGDSESSQGSQTA. Positions 768-782 are enriched in acidic residues; that stretch reads LDEEDLLEEEEEDEG. A PDZ-binding motif is present at residues 834-837; sequence MTLV.

This sequence belongs to the dapper family. Interacts with dvl2.

Its subcellular location is the cytoplasm. It localises to the late endosome. The protein resides in the nucleus. The protein localises to the cell membrane. Its function is as follows. Involved in regulation of intracellular signaling pathways during development. Specifically thought to play a role in canonical and/or non-canonical Wnt signaling pathways through interaction with DSH (Dishevelled) family proteins. Positive regulator of the Wnt signaling pathway which acts downstream of wnt1 indicative for non-canonical Wnt signaling. Also negatively regulates the Nodal signaling pathway, possibly by promoting the lysosomal degradation of Nodal receptors. Required for convergent extension movements in gastrulation. This chain is Dapper homolog 2 (dact2), found in Danio rerio (Zebrafish).